The sequence spans 199 residues: Recombination protein RecR (199 aa).

A C4-type zinc finger spans residues 57–72 (CQSCRTFTEQDLCPIC). In terms of domain architecture, Toprim spans 81-176 (GIICVVETPA…VISRIAHGVP (96 aa)).

This sequence belongs to the RecR family.

Functionally, may play a role in DNA repair. It seems to be involved in an RecBC-independent recombinational process of DNA repair. It may act with RecF and RecO. The polypeptide is Recombination protein RecR (Shewanella frigidimarina (strain NCIMB 400)).